We begin with the raw amino-acid sequence, 320 residues long: MKANNTTTSALWLQITYITMEAAIGLCAVVGNMLVIWVVKLNRTLRTTTFYFIVSLALADIAVGVLVIPLAIAVSLEVQMHFYACLFMSCVLLVFTHASIMSLLAIAVDRYLRVKLTVRYRTVTTQRRIWLFLGLCWLVSFLVGLTPMFGWNRKVTLELSQNSSTLSCHFRSVVGLDYMVFFSFITWILIPLVVMCIIYLDIFYIIRNKLSQNLTGFRETRAFYGREFKTAKSLFLVLFLFALCWLPLSIINFVSYFNVKIPEIAMCLGILLSHANSMMNPIVYACKIKKFKETYFVILRACRLCQTSDSLDSNLEQTTE.

Residues 1 to 16 (MKANNTTTSALWLQIT) lie on the Extracellular side of the membrane. 2 N-linked (GlcNAc...) asparagine glycosylation sites follow: Asn-4 and Asn-5. The helical transmembrane segment at 17 to 39 (YITMEAAIGLCAVVGNMLVIWVV) threads the bilayer. The Cytoplasmic portion of the chain corresponds to 40 to 50 (KLNRTLRTTTF). A helical transmembrane segment spans residues 51–74 (YFIVSLALADIAVGVLVIPLAIAV). Topologically, residues 75 to 86 (SLEVQMHFYACL) are extracellular. Cys-85 and Cys-168 are disulfide-bonded. The chain crosses the membrane as a helical span at residues 87-108 (FMSCVLLVFTHASIMSLLAIAV). Topologically, residues 109–128 (DRYLRVKLTVRYRTVTTQRR) are cytoplasmic. The chain crosses the membrane as a helical span at residues 129 to 150 (IWLFLGLCWLVSFLVGLTPMFG). Over 151–179 (WNRKVTLELSQNSSTLSCHFRSVVGLDYM) the chain is Extracellular. A helical transmembrane segment spans residues 180 to 200 (VFFSFITWILIPLVVMCIIYL). The Cytoplasmic segment spans residues 201-233 (DIFYIIRNKLSQNLTGFRETRAFYGREFKTAKS). Residues 234–257 (LFLVLFLFALCWLPLSIINFVSYF) traverse the membrane as a helical segment. The Extracellular segment spans residues 258-263 (NVKIPE). Residues 264-286 (IAMCLGILLSHANSMMNPIVYAC) form a helical membrane-spanning segment. Over 287-320 (KIKKFKETYFVILRACRLCQTSDSLDSNLEQTTE) the chain is Cytoplasmic. Cys-305 carries S-palmitoyl cysteine lipidation. Phosphothreonine occurs at positions 307, 318, and 319.

Belongs to the G-protein coupled receptor 1 family. Post-translationally, phosphorylation on Thr-318 and Thr-319 may be crucial for rapid desensitization. Phosphorylation on Thr-318 may be necessary for phosphorylation on Thr-319 to occur. Testis, particularly in spermatocytes and spermatids but not in spermatogonia. Low levels in the brain.

It localises to the cell membrane. Receptor for adenosine. The activity of this receptor is mediated by G proteins which inhibits adenylyl cyclase. May play a role during reproduction. The chain is Adenosine receptor A3 (Adora3) from Rattus norvegicus (Rat).